The following is a 389-amino-acid chain: MGQNLSVTNPLGFFPEHQLDPLFRANTNNPDWDFNPNKDTWPEATKVGVGAFGPGFTPPHGGLLGWSPQAQGVTTILPAVPPPASTNRQSGRRPTPISPPLRDTHPQAMQWNSTVFHQALQDPRVRGLYFPAGGSSSGTVSPVPTTASPISSTFLKTGDPALNMESISSGFLGPLLVLQAGFFLLTKILTIPQSLDSWWTSLNFLGGAPVCPGQNSQSLTSNHSPTSCPPICPGYRWMCLRRFIIFLFILLLCLIFLLVLLDYRGMLPVCPLLPGTTTTSVGPCRTCTISAPGTSLFPSCCCTKPSDGNCTCIPIPPSWAFAKFLWGWASVRFSWLNLLVPFVQWFAGLSPTVWLSVIWMIWYWGPSLYNILSPFIPLLPIFFCLWAYI.

The residue at position 1 (Met-1) is an N-acetylmethionine. Gly-2 carries the N-myristoyl glycine; by host lipid modification. The segment at 2–108 (GQNLSVTNPL…PPLRDTHPQA (107 aa)) is pre-S1. The tract at residues 2–163 (GQNLSVTNPL…FLKTGDPALN (162 aa)) is pre-S. The Virion surface; in external conformation segment spans residues 2 to 170 (GQNLSVTNPL…ALNMESISSG (169 aa)). The Intravirion; in internal conformation segment spans residues 2 to 242 (GQNLSVTNPL…PGYRWMCLRR (241 aa)). The segment at 78-105 (PAVPPPASTNRQSGRRPTPISPPLRDTH) is disordered. Residues 109–163 (MQWNSTVFHQALQDPRVRGLYFPAGGSSSGTVSPVPTTASPISSTFLKTGDPALN) are pre-S2. The helical transmembrane segment at 171 to 191 (FLGPLLVLQAGFFLLTKILTI) threads the bilayer. Over 192–242 (PQSLDSWWTSLNFLGGAPVCPGQNSQSLTSNHSPTSCPPICPGYRWMCLRR) the chain is Intravirion; in external conformation. The helical transmembrane segment at 243-263 (FIIFLFILLLCLIFLLVLLDY) threads the bilayer. Residues 264 to 337 (RGMLPVCPLL…WASVRFSWLN (74 aa)) lie on the Virion surface side of the membrane. Asn-309 carries an N-linked (GlcNAc...) asparagine; by host glycan. The chain crosses the membrane as a helical span at residues 338 to 358 (LLVPFVQWFAGLSPTVWLSVI). The Intravirion segment spans residues 359–364 (WMIWYW). The chain crosses the membrane as a helical span at residues 365–387 (GPSLYNILSPFIPLLPIFFCLWA). Topologically, residues 388–389 (YI) are virion surface.

Belongs to the orthohepadnavirus major surface antigen family. In terms of assembly, in its internal form (Li-HBsAg), interacts with the capsid protein and with the isoform S. Interacts with host chaperone CANX. As to quaternary structure, associates with host chaperone CANX through its pre-S2 N glycan; this association may be essential for isoform M proper secretion. Interacts with isoform L. Interacts with the antigens of satellite virus HDV (HDVAgs); this interaction is required for encapsidation of HDV genomic RNA. Isoform M is N-terminally acetylated by host at a ratio of 90%, and N-glycosylated by host at the pre-S2 region. Post-translationally, myristoylated.

It localises to the virion membrane. Functionally, the large envelope protein exists in two topological conformations, one which is termed 'external' or Le-HBsAg and the other 'internal' or Li-HBsAg. In its external conformation the protein attaches the virus to cell receptors and thereby initiating infection. This interaction determines the species specificity and liver tropism. This attachment induces virion internalization predominantly through caveolin-mediated endocytosis. The large envelope protein also assures fusion between virion membrane and endosomal membrane. In its internal conformation the protein plays a role in virion morphogenesis and mediates the contact with the nucleocapsid like a matrix protein. Its function is as follows. The middle envelope protein plays an important role in the budding of the virion. It is involved in the induction of budding in a nucleocapsid independent way. In this process the majority of envelope proteins bud to form subviral lipoprotein particles of 22 nm of diameter that do not contain a nucleocapsid. The protein is Large envelope protein of Pongo pygmaeus (Bornean orangutan).